A 360-amino-acid chain; its full sequence is Phenylalanine--tRNA ligase alpha subunit (360 aa).

Residue Glu-260 coordinates Mg(2+).

Belongs to the class-II aminoacyl-tRNA synthetase family. Phe-tRNA synthetase alpha subunit type 1 subfamily. In terms of assembly, tetramer of two alpha and two beta subunits. Requires Mg(2+) as cofactor.

Its subcellular location is the cytoplasm. It carries out the reaction tRNA(Phe) + L-phenylalanine + ATP = L-phenylalanyl-tRNA(Phe) + AMP + diphosphate + H(+). In Bartonella tribocorum (strain CIP 105476 / IBS 506), this protein is Phenylalanine--tRNA ligase alpha subunit.